A 114-amino-acid polypeptide reads, in one-letter code: Mobility group protein 1A (114 aa).

The HMG box DNA-binding region spans 5–71 (PKRPLSAYML…EYEKAMKEFE (67 aa)). The disordered stretch occupies residues 69–114 (EFERNGGDKSSGASTKKRGKAAEKKKPAKKSKKKDSEDDEEEDESD). The span at 105–114 (EDDEEEDESD) shows a compositional bias: acidic residues.

Belongs to the HMGB family.

It is found in the nucleus. Its subcellular location is the chromosome. Its function is as follows. Found in condensed chromomeres. Binds preferentially to AT-rich DNA. The sequence is that of Mobility group protein 1A (HMG1A) from Chironomus tentans (Midge).